The sequence spans 693 residues: MVNQVATDRFIQDLERVAQVRSEMSVCLNKLAETINKAELAGDSSSGKLSLERDIEDITIASKNLQQGVFRLLVLGDMKRGKSTFLNALIGENLLPSDVNPCTAVLTVLRYGPEKKVTIHFNDGKSPQQLDFQNFKYKYTIDPAEAKKLEQEKKQAFPDVDYAVVEYPLTLLQKGIEIVDSPGLNDTEARNELSLGYVNNCHAILFVMRASQPCTLGERRYLENYIKGRGLTVFFLVNAWDQVRESLIDPDDVEELQASENRLRQVFNANLAEYCTVEGQNIYDERVFELSSIQALRRRLKNPQADLDGTGFPKFMDSLNTFLTRERAIAELRQVRTLARLACNHTREAVARRIPLLEQDVNELKKRIDSVEPEFNKLTGIRDEFQKEIINTRDTQARTISESFRSYVLNLGNTFENDFLRYQPELNLFDFLSSGKREAFNAALQKAFEQYITDKSAAWTLTAEKDINAAFKELSRSASQYGASYNQITDQITEKLTGKDVKVHTTTTAEEDNSPGWAKWAMGLLSLSKGNLAGFALAGAGFDWKNILLNYFTVIGIGGIITAVTGILLGPIGFALLGLGVGFLQADQARRELVKTAKKELVKHLPQVAHEQSQVVYNAVKECFDSYEREVSKRINDDIVSRKSELDNLVKQKQTREINRESEFNRLKNLQEDVIAQLQKIEAAYSNLLAYYS.

The Cytoplasmic portion of the chain corresponds to 1–521; that stretch reads MVNQVATDRF…DNSPGWAKWA (521 aa). The region spanning 66–313 is the Dynamin-type G domain; that stretch reads QQGVFRLLVL…QADLDGTGFP (248 aa). The tract at residues 76–83 is G1 motif; sequence GDMKRGKS. 79–84 contacts GTP; that stretch reads KRGKST. The G2 motif stretch occupies residues 102–103; that stretch reads CT. The segment at 180-183 is G3 motif; sequence DSPG. Position 235–241 (235–241) interacts with GTP; that stretch reads FLVNAWD. Positions 238–241 are G4 motif; it reads NAWD. Asparagine 268 is a region of interest (G5 motif). 292-293 contacts GTP; it reads SI. A middle domain region spans residues 311 to 571; the sequence is GFPKFMDSLN…TAVTGILLGP (261 aa). Residues 347–378 adopt a coiled-coil conformation; sequence REAVARRIPLLEQDVNELKKRIDSVEPEFNKL. The stretch at 522-574 is an intramembrane region; the sequence is MGLLSLSKGNLAGFALAGAGFDWKNILLNYFTVIGIGGIITAVTGILLGPIGF. The paddle domain stretch occupies residues 572–606; sequence IGFALLGLGVGFLQADQARRELVKTAKKELVKHLP. Topologically, residues 575–693 are cytoplasmic; sequence ALLGLGVGFL…AYSNLLAYYS (119 aa). Residues 607-693 form a GED region; sequence QVAHEQSQVV…AYSNLLAYYS (87 aa). The stretch at 661–688 forms a coiled coil; sequence ESEFNRLKNLQEDVIAQLQKIEAAYSNL.

It belongs to the TRAFAC class dynamin-like GTPase superfamily. Dynamin/Fzo/YdjA family. Mitofusin subfamily. Homodimer. Self-assembles in the presence of GMP-PNP and liposomes, and probably also in the presence of GTP.

The protein resides in the cell inner membrane. It catalyses the reaction GTP + H2O = GDP + phosphate + H(+). Its function is as follows. Dynamin-related GTPase probably involved in membrane remodeling. Lipid and nucleotide-binding are thought to induce a large intramolecular rearrangement, leading to assembly on lipid bilayers and possible membrane curving. In the presence of the non-hydrolyzable GTP analog GMP-PNP self-assembles on a lipid bilayer; this does not stimulate subsequent GTPase activity. Does not bind lipids in the presence of GDP; perhaps GTP hydrolysis disrupts membrane-binding. The protein is Bacterial dynamin-like protein of Nostoc punctiforme (strain ATCC 29133 / PCC 73102).